Here is a 210-residue protein sequence, read N- to C-terminus: Putative 4-hydroxy-4-methyl-2-oxoglutarate aldolase (210 aa).

Residues 87 to 90 and arginine 109 contribute to the substrate site; that span reads GDFV. Aspartate 110 provides a ligand contact to a divalent metal cation.

The protein belongs to the class II aldolase/RraA-like family. As to quaternary structure, homotrimer. A divalent metal cation serves as cofactor.

It carries out the reaction 4-hydroxy-4-methyl-2-oxoglutarate = 2 pyruvate. It catalyses the reaction oxaloacetate + H(+) = pyruvate + CO2. Catalyzes the aldol cleavage of 4-hydroxy-4-methyl-2-oxoglutarate (HMG) into 2 molecules of pyruvate. Also contains a secondary oxaloacetate (OAA) decarboxylase activity due to the common pyruvate enolate transition state formed following C-C bond cleavage in the retro-aldol and decarboxylation reactions. The protein is Putative 4-hydroxy-4-methyl-2-oxoglutarate aldolase of Halalkalibacterium halodurans (strain ATCC BAA-125 / DSM 18197 / FERM 7344 / JCM 9153 / C-125) (Bacillus halodurans).